Reading from the N-terminus, the 1125-residue chain is Exportin-6 (1125 aa).

Ala-2 carries the post-translational modification N-acetylalanine. Positions Ile-31–Ala-97 constitute an Importin N-terminal domain. Ser-199 is modified (phosphoserine). 2 positions are modified to phosphothreonine: Thr-201 and Thr-204. Residues Ser-208 and Ser-224 each carry the phosphoserine modification.

The protein belongs to the exportin family. Found in a complex with XPO6, Ran, ACTB and PFN1. Interacts with ACTB. Interacts with ACTB in a RanGTP-dependent manner.

Its subcellular location is the nucleus. The protein localises to the cytoplasm. Functionally, mediates the nuclear export of actin and profilin-actin complexes in somatic cells. The sequence is that of Exportin-6 (XPO6) from Homo sapiens (Human).